The sequence spans 186 residues: Peptidyl-tRNA hydrolase (186 aa).

TRNA is bound at residue Tyr14. The active-site Proton acceptor is the His19. The tRNA site is built by Tyr60 and Asn62.

The protein belongs to the PTH family. As to quaternary structure, monomer.

It localises to the cytoplasm. The catalysed reaction is an N-acyl-L-alpha-aminoacyl-tRNA + H2O = an N-acyl-L-amino acid + a tRNA + H(+). Functionally, hydrolyzes ribosome-free peptidyl-tRNAs (with 1 or more amino acids incorporated), which drop off the ribosome during protein synthesis, or as a result of ribosome stalling. Catalyzes the release of premature peptidyl moieties from peptidyl-tRNA molecules trapped in stalled 50S ribosomal subunits, and thus maintains levels of free tRNAs and 50S ribosomes. The sequence is that of Peptidyl-tRNA hydrolase from Mycoplasmopsis pulmonis (strain UAB CTIP) (Mycoplasma pulmonis).